An 84-amino-acid polypeptide reads, in one-letter code: Anaphase-promoting complex subunit 11 (84 aa).

The Zn(2+) site is built by cysteine 23, cysteine 26, cysteine 34, cysteine 37, cysteine 44, cysteine 51, histidine 53, histidine 56, histidine 58, cysteine 59, cysteine 73, and cysteine 76. The RING-type zinc-finger motif lies at 34–77; the sequence is CPDCKVPGDDCPLVWGQCSHCFHMHCILKWLHAQQVQQHCPMCR.

The protein belongs to the RING-box family. The mammalian APC/C is composed at least of 14 distinct subunits ANAPC1, ANAPC2, CDC27/APC3, ANAPC4, ANAPC5, CDC16/APC6, ANAPC7, CDC23/APC8, ANAPC10, ANAPC11, CDC26/APC12, ANAPC13, ANAPC15 and ANAPC16 that assemble into a complex of at least 19 chains with a combined molecular mass of around 1.2 MDa; APC/C interacts with FZR1 and FBXO5. Interacts with the cullin domain of ANAPC2. Interacts with UBE2D2. In terms of processing, auto-ubiquitinated. In terms of tissue distribution, expressed at high levels in skeletal muscle and heart; in moderate levels in brain, kidney, and liver; and at low levels in colon, thymus, spleen, small intestine, placenta, lung and peripheral blood leukocyte.

It is found in the cytoplasm. The protein localises to the nucleus. It functions in the pathway protein modification; protein ubiquitination. Its function is as follows. Together with the cullin protein ANAPC2, constitutes the catalytic component of the anaphase promoting complex/cyclosome (APC/C), a cell cycle-regulated E3 ubiquitin ligase that controls progression through mitosis and the G1 phase of the cell cycle. The APC/C complex acts by mediating ubiquitination and subsequent degradation of target proteins: it mainly mediates the formation of 'Lys-11'-linked polyubiquitin chains and, to a lower extent, the formation of 'Lys-48'- and 'Lys-63'-linked polyubiquitin chains. The APC/C complex catalyzes assembly of branched 'Lys-11'-/'Lys-48'-linked branched ubiquitin chains on target proteins. May recruit the E2 ubiquitin-conjugating enzymes to the complex. The chain is Anaphase-promoting complex subunit 11 (ANAPC11) from Homo sapiens (Human).